The primary structure comprises 259 residues: UPF0246 protein PP_1289 (259 aa).

The protein belongs to the UPF0246 family.

This chain is UPF0246 protein PP_1289, found in Pseudomonas putida (strain ATCC 47054 / DSM 6125 / CFBP 8728 / NCIMB 11950 / KT2440).